The chain runs to 125 residues: MADLQKIVDDLSALTVLEAAELAKLLEEKWGVSAAAAVAVAAPGAGGAAAAPAEEKTEFTVVLASAGDKKIEVIKEVRAITGLGLKEAKDLVEGAPKPVKEGVNKDEAEKIKGQLEKAGAKVELK.

Belongs to the bacterial ribosomal protein bL12 family. Homodimer. Part of the ribosomal stalk of the 50S ribosomal subunit. Forms a multimeric L10(L12)X complex, where L10 forms an elongated spine to which 2 to 4 L12 dimers bind in a sequential fashion. Binds GTP-bound translation factors.

Its function is as follows. Forms part of the ribosomal stalk which helps the ribosome interact with GTP-bound translation factors. Is thus essential for accurate translation. The polypeptide is Large ribosomal subunit protein bL12 (Bradyrhizobium sp. (strain BTAi1 / ATCC BAA-1182)).